Here is a 347-residue protein sequence, read N- to C-terminus: D-alanine--D-alanine ligase (347 aa).

The ATP-grasp domain occupies 134-332 (KLYAKDLGVK…LAQSLPKTPK (199 aa)). Residue 161 to 216 (LIKFNFPFIVKPSNAGSSLGVNVVKEEKELVYALDSAFEYSKEVLIEPFIQGVKEY) participates in ATP binding. Residues Asp-288, Glu-300, and Asn-302 each coordinate Mg(2+).

This sequence belongs to the D-alanine--D-alanine ligase family. The cofactor is Mg(2+). Requires Mn(2+) as cofactor.

Its subcellular location is the cytoplasm. The enzyme catalyses 2 D-alanine + ATP = D-alanyl-D-alanine + ADP + phosphate + H(+). Its pathway is cell wall biogenesis; peptidoglycan biosynthesis. In terms of biological role, cell wall formation. In Helicobacter pylori (strain P12), this protein is D-alanine--D-alanine ligase.